Here is a 428-residue protein sequence, read N- to C-terminus: Gamma-glutamyl phosphate reductase (428 aa).

The protein belongs to the gamma-glutamyl phosphate reductase family.

It is found in the cytoplasm. It carries out the reaction L-glutamate 5-semialdehyde + phosphate + NADP(+) = L-glutamyl 5-phosphate + NADPH + H(+). Its pathway is amino-acid biosynthesis; L-proline biosynthesis; L-glutamate 5-semialdehyde from L-glutamate: step 2/2. Its function is as follows. Catalyzes the NADPH-dependent reduction of L-glutamate 5-phosphate into L-glutamate 5-semialdehyde and phosphate. The product spontaneously undergoes cyclization to form 1-pyrroline-5-carboxylate. This chain is Gamma-glutamyl phosphate reductase, found in Streptomyces avermitilis (strain ATCC 31267 / DSM 46492 / JCM 5070 / NBRC 14893 / NCIMB 12804 / NRRL 8165 / MA-4680).